A 368-amino-acid polypeptide reads, in one-letter code: Glutamate 5-kinase (368 aa).

Residue K11 participates in ATP binding. Substrate-binding residues include S51, D138, and N150. ATP is bound by residues 170–171 (TD) and 212–218 (TGGMATK). The region spanning 276-354 (AGEIIVDHGA…QQISQILGYE (79 aa)) is the PUA domain.

It belongs to the glutamate 5-kinase family.

Its subcellular location is the cytoplasm. The catalysed reaction is L-glutamate + ATP = L-glutamyl 5-phosphate + ADP. It functions in the pathway amino-acid biosynthesis; L-proline biosynthesis; L-glutamate 5-semialdehyde from L-glutamate: step 1/2. Its function is as follows. Catalyzes the transfer of a phosphate group to glutamate to form L-glutamate 5-phosphate. The sequence is that of Glutamate 5-kinase from Photorhabdus laumondii subsp. laumondii (strain DSM 15139 / CIP 105565 / TT01) (Photorhabdus luminescens subsp. laumondii).